The primary structure comprises 390 residues: Queuine tRNA-ribosyltransferase (390 aa).

Asp92 (proton acceptor) is an active-site residue. Residues 92–96 (DSGGF), Asp146, Gln195, and Gly222 contribute to the substrate site. The tract at residues 253-259 (GVGTPED) is RNA binding. Asp272 functions as the Nucleophile in the catalytic mechanism. The interval 277-281 (TRNAR) is RNA binding; important for wobble base 34 recognition. Zn(2+) contacts are provided by Cys310, Cys312, Cys315, and His354.

This sequence belongs to the queuine tRNA-ribosyltransferase family. In terms of assembly, homodimer. Within each dimer, one monomer is responsible for RNA recognition and catalysis, while the other monomer binds to the replacement base PreQ1. It depends on Zn(2+) as a cofactor.

It catalyses the reaction 7-aminomethyl-7-carbaguanine + guanosine(34) in tRNA = 7-aminomethyl-7-carbaguanosine(34) in tRNA + guanine. The protein operates within tRNA modification; tRNA-queuosine biosynthesis. In terms of biological role, catalyzes the base-exchange of a guanine (G) residue with the queuine precursor 7-aminomethyl-7-deazaguanine (PreQ1) at position 34 (anticodon wobble position) in tRNAs with GU(N) anticodons (tRNA-Asp, -Asn, -His and -Tyr). Catalysis occurs through a double-displacement mechanism. The nucleophile active site attacks the C1' of nucleotide 34 to detach the guanine base from the RNA, forming a covalent enzyme-RNA intermediate. The proton acceptor active site deprotonates the incoming PreQ1, allowing a nucleophilic attack on the C1' of the ribose to form the product. After dissociation, two additional enzymatic reactions on the tRNA convert PreQ1 to queuine (Q), resulting in the hypermodified nucleoside queuosine (7-(((4,5-cis-dihydroxy-2-cyclopenten-1-yl)amino)methyl)-7-deazaguanosine). This is Queuine tRNA-ribosyltransferase from Delftia acidovorans (strain DSM 14801 / SPH-1).